The sequence spans 1071 residues: Serine/threonine-protein phosphatase 6 regulatory ankyrin repeat subunit C (1071 aa).

28 ANK repeats span residues S7–A36, E40–A69, V73–A102, Y106–M135, T139–A168, K172–C201, R205–E234, F238–Q267, R271–M301, E305–C334, Y338–R367, H371–I400, F422–K451, F455–E484, S488–L539, K543–D573, G578–V607, V611–L640, S645–L674, E681–M710, R714–S743, Q747–P776, H784–E814, N816–L845, K852–A881, S885–L915, N919–A951, and M955–A984.

As to quaternary structure, protein phosphatase 6 (PP6) holoenzyme is proposed to be a heterotrimeric complex formed by the catalytic subunit, a SAPS domain-containing subunit (PP6R) and an ankyrin repeat-domain containing regulatory subunit (ARS).

Putative regulatory subunit of protein phosphatase 6 (PP6) that may be involved in the recognition of phosphoprotein substrates. The protein is Serine/threonine-protein phosphatase 6 regulatory ankyrin repeat subunit C (ankrd52) of Danio rerio (Zebrafish).